A 184-amino-acid polypeptide reads, in one-letter code: Mitochondrial translation release factor in rescue (184 aa).

Residues 1 to 98 (MSSRSTWALL…HVPSGIVVKC (98 aa)) constitute a mitochondrion transit peptide. A GGQ domain region spans residues 60 to 124 (ESELEEQFVK…LQEKVDVFYN (65 aa)). A GGQ motif is present at residues 74 to 76 (GGQ). Glutamine 76 carries the post-translational modification N5-methylglutamine. A coiled-coil region spans residues 130 to 178 (VHKEKLEAERRKRERKKRAKETLEKKKLLKELREASQNITEKKADADGI). The disordered stretch occupies residues 132–184 (KEKLEAERRKRERKKRAKETLEKKKLLKELREASQNITEKKADADGIPRGFQE). The segment covering 149 to 184 (KETLEKKKLLKELREASQNITEKKADADGIPRGFQE) has biased composition (basic and acidic residues).

The protein belongs to the prokaryotic/mitochondrial release factor family. Interacts (via C-terminus) with MTRES1 (via S4 domain). Associates with mitoribosomal S39 large subunit, peptidyl tRNA and nascent chain. Methylation of glutamine in the GGQ triplet by HEMK1.

The protein resides in the mitochondrion. In terms of biological role, part of a mitoribosome-associated quality control pathway that prevents aberrant translation by responding to interruptions during elongation. As heterodimer with MTRES1, ejects the unfinished nascent chain and peptidyl transfer RNA (tRNA), respectively, from stalled ribosomes. Recruitment of mitoribosome biogenesis factors to these quality control intermediates suggests additional roles for MTRES1 and MTRF during mitoribosome rescue. This chain is Mitochondrial translation release factor in rescue, found in Mus musculus (Mouse).